A 446-amino-acid chain; its full sequence is MRRHPLLWKLALLQVGFCLLLTWLIYTWGLSVERSTYFLAPADRHYLADYARQAEDAWRREGAAGAERFRKELSAKEDTWVALVGPHLESLGSTPLSAEESSHLTFMRKLDWPMSRRLQDELPYVSIEFPGHPEQGRLVIQLPERLLPGGLTPWTHLVTHGIVPTLLAALLGLLLYRHLVVPLNRLRDRADALRADELESTPLAAPLAARRDELGELAQALEHMAERLRLSLAQQRLLLRTLSHELRTPLARLRIAHDSELPPEQLRQRLDREIGDMQRLLEDTLDLAWMDTERPQLPTEPVLALSVWEALRDDACFESGWDPARLPCRLGVDCRVEVHLDSLAQAMENLLRNAIRHSPEDGTVSLDGEREGDFWHLRLQDQGPGVAEDQLERIFLPYQRLDDSAGEGFGLGLAIARRAIELQGGRLWASNGKPGLCLHLWLPAAA.

Topologically, residues 1–9 (MRRHPLLWK) are cytoplasmic. The helical transmembrane segment at 10–30 (LALLQVGFCLLLTWLIYTWGL) threads the bilayer. Topologically, residues 31–155 (SVERSTYFLA…LLPGGLTPWT (125 aa)) are periplasmic. The helical transmembrane segment at 156–176 (HLVTHGIVPTLLAALLGLLLY) threads the bilayer. Positions 177–233 (RHLVVPLNRLRDRADALRADELESTPLAAPLAARRDELGELAQALEHMAERLRLSLA) constitute an HAMP domain. Topologically, residues 177–446 (RHLVVPLNRL…CLHLWLPAAA (270 aa)) are cytoplasmic. The region spanning 241–446 (TLSHELRTPL…CLHLWLPAAA (206 aa)) is the Histidine kinase domain. His244 carries the phosphohistidine; by autocatalysis modification.

Its subcellular location is the cell inner membrane. It catalyses the reaction ATP + protein L-histidine = ADP + protein N-phospho-L-histidine.. In terms of biological role, member of the two-component regulatory system PfeR/PfeS. May activate PfeR by phosphorylation. This is Sensor protein PfeS (pfeS) from Pseudomonas aeruginosa (strain ATCC 15692 / DSM 22644 / CIP 104116 / JCM 14847 / LMG 12228 / 1C / PRS 101 / PAO1).